Consider the following 118-residue polypeptide: Secreted RxLR effector protein 143 (118 aa).

The N-terminal stretch at 1-18 (MRHCAFLFRLFLIGYSCS) is a signal peptide. A compositionally biased stretch (basic and acidic residues) spans 35-65 (DELPRAEQWDSDGKRILQADDPEHIPTEERG). The disordered stretch occupies residues 35-66 (DELPRAEQWDSDGKRILQADDPEHIPTEERGI). A RxLR-dEER motif is present at residues 49–64 (RILQADDPEHIPTEER).

The protein belongs to the RxLR effector family.

It is found in the secreted. The protein resides in the host cell membrane. Functionally, secreted effector that completely suppresses the host cell death induced by cell death-inducing proteins. This is Secreted RxLR effector protein 143 from Plasmopara viticola (Downy mildew of grapevine).